A 168-amino-acid polypeptide reads, in one-letter code: Peptidyl-Lys metalloendopeptidase (168 aa).

Cystine bridges form between cysteine 6/cysteine 76 and cysteine 78/cysteine 98. A Zn(2+)-binding site is contributed by histidine 118. The active site involves glutamate 119. Positions 122 and 131 each coordinate Zn(2+).

Requires Zn(2+) as cofactor.

The protein resides in the secreted. The catalysed reaction is Preferential cleavage in proteins: -Xaa-|-Lys- (in which Xaa may be Pro).. Inhibited by chelating agents such as EDTA and 1,10-phenanthroline. The protein is Peptidyl-Lys metalloendopeptidase (MEP) of Pleurotus ostreatus (Oyster mushroom).